The sequence spans 435 residues: Adenylosuccinate synthetase (435 aa).

Residues 19-25 (GDEGKGK) and 49-51 (GHT) each bind GTP. D20 serves as the catalytic Proton acceptor. Mg(2+) is bound by residues D20 and G49. IMP-binding positions include 20-23 (DEGK), 47-50 (NAGH), T139, R153, N233, T248, and R312. Residue H50 is the Proton donor of the active site. Residue 308–314 (VTTGRKR) participates in substrate binding. Residues R314, 340–342 (KLD), and 422–424 (GVG) each bind GTP.

This sequence belongs to the adenylosuccinate synthetase family. Homodimer. Mg(2+) serves as cofactor.

The protein localises to the cytoplasm. It carries out the reaction IMP + L-aspartate + GTP = N(6)-(1,2-dicarboxyethyl)-AMP + GDP + phosphate + 2 H(+). Its pathway is purine metabolism; AMP biosynthesis via de novo pathway; AMP from IMP: step 1/2. Its function is as follows. Plays an important role in the de novo pathway and in the salvage pathway of purine nucleotide biosynthesis. Catalyzes the first committed step in the biosynthesis of AMP from IMP. The protein is Adenylosuccinate synthetase of Brugia malayi (Filarial nematode worm).